Reading from the N-terminus, the 174-residue chain is Disulfide bond formation protein B (174 aa).

The Cytoplasmic portion of the chain corresponds to 1 to 12; that stretch reads MLNWIDTAPRRI. Residues 13–29 form a helical membrane-spanning segment; that stretch reads LALISAACVAMLAFGMY. The Periplasmic portion of the chain corresponds to 30-47; the sequence is LQHVVGLEPCPMCIVQRY. C39 and C42 are oxidised to a cystine. Residues 48 to 64 form a helical membrane-spanning segment; that stretch reads ALIGVAVFAGLASARGQ. Topologically, residues 65 to 69 are cytoplasmic; the sequence is KGWWM. The helical transmembrane segment at 70-87 threads the bilayer; sequence TWSVLALVAAGFGAFVAA. Over 88–143 the chain is Periplasmic; sequence RQSWLQWYPPEIATCGRDFYGMIENYPISRAIPMIFRGSGDCTAVDWTFLGGSIAN. An intrachain disulfide couples C102 to C129. The chain crosses the membrane as a helical span at residues 144 to 162; that stretch reads WSFVWFLLFAVLLLVLLVR. The Cytoplasmic portion of the chain corresponds to 163–174; sequence GGRGAPDTLARA.

It belongs to the DsbB family.

It is found in the cell inner membrane. Required for disulfide bond formation in some periplasmic proteins. Acts by oxidizing the DsbA protein. The polypeptide is Disulfide bond formation protein B (Acidovorax sp. (strain JS42)).